Consider the following 75-residue polypeptide: OcyC3 (75 aa).

The first 22 residues, 1 to 22, serve as a signal peptide directing secretion; that stretch reads MQYKTFLVISLAYLLVADEAAA. Positions 51–75 are excised as a propeptide; that stretch reads EINNVFEPYHENLDLELERFLSQLQ.

As to expression, expressed by the venom gland.

It localises to the secreted. It is found in the target cell membrane. Its function is as follows. Amphipathic peptide with probable antimicrobial activity. May act by disrupting the integrity of the bacterial cell membrane. This Opisthacanthus cayaporum (South American scorpion) protein is OcyC3.